The chain runs to 173 residues: Ribulose bisphosphate carboxylase small subunit, chloroplastic 1 (173 aa).

Residues 1 to 49 (MASIPATVATVAQANMVAPFTGLKANAAFPVTKKVNDFSTLPSNGGRVQ) constitute a chloroplast transit peptide.

This sequence belongs to the RuBisCO small chain family. In terms of assembly, heterohexadecamer of 8 large and 8 small subunits.

It is found in the plastid. Its subcellular location is the chloroplast. Its function is as follows. RuBisCO catalyzes two reactions: the carboxylation of D-ribulose 1,5-bisphosphate, the primary event in carbon dioxide fixation, as well as the oxidative fragmentation of the pentose substrate. Both reactions occur simultaneously and in competition at the same active site. Although the small subunit is not catalytic it is essential for maximal activity. The sequence is that of Ribulose bisphosphate carboxylase small subunit, chloroplastic 1 from Flaveria pringlei.